The sequence spans 118 residues: MSQATATQAKGIQLSDAALKHLLALKEQQGKDLCLRVGVRQGGCSGMSYMMDFEEPNRATEHDEVFDYEGFQIICDRKSLLYLYGLMLDYSNALIGGGFQFTNPNANQTCGCGKSFGV.

This sequence belongs to the HesB/IscA family. Ycf83 subfamily.

This is an uncharacterized protein from Synechocystis sp. (strain ATCC 27184 / PCC 6803 / Kazusa).